The sequence spans 106 residues: ATP-dependent Clp protease adapter protein ClpS (106 aa).

This sequence belongs to the ClpS family. As to quaternary structure, binds to the N-terminal domain of the chaperone ClpA.

Involved in the modulation of the specificity of the ClpAP-mediated ATP-dependent protein degradation. This chain is ATP-dependent Clp protease adapter protein ClpS, found in Photobacterium profundum (strain SS9).